An 813-amino-acid polypeptide reads, in one-letter code: MGWRPRRARGTPLLLLLLLLLLWPVPGAGVLQGHIPGQPVTPHWVLDGQPWRTVSLEEPVSKPDMGLVALEAEGQELLLELEKNHRLLAPGYIETHYGPDGQPVVLAPNHTDHCHYQGRVRGFPDSWVVLCTCSGMSGLITLSRNASYYLRPWPPRGSKDFSTHEIFRMEQLLTWKGTCGHRDPGNKAGMTSLPGGPQSRGRREARRTRKYLELYIVADHTLFLTRHRNLNHTKQRLLEVANYVDQLLRTLDIQVALTGLEVWTERDRSRVTQDANATLWAFLQWRRGLWAQRPHDSAQLLTGRAFQGATVGLAPVEGMCRAESSGGVSTDHSELPIGAAATMAHEIGHSLGLSHDPDGCCVEAAAESGGCVMAAATGHPFPRVFSACSRRQLRAFFRKGGGACLSNAPDPGLPVPPALCGNGFVEAGEECDCGPGQECRDLCCFAHNCSLRPGAQCAHGDCCVRCLLKPAGALCRQAMGDCDLPEFCTGTSSHCPPDVYLLDGSPCARGSGYCWDGACPTLEQQCQQLWGPGSHPAPEACFQVVNSAGDAHGNCGQDSEGHFLPCAGRDALCGKLQCQGGKPSLLAPHMVPVDSTVHLDGQEVTCRGALALPSAQLDLLGLGLVEPGTQCGPRMVCQSRRCRKNAFQELQRCLTACHSHGVCNSNHNCHCAPGWAPPFCDKPGFGGSMDSGPVQAENHDTFLLAMLLSVLLPLLPGAGLAWCCYRLPGAHLQRCSWGCRRDPACSGPKDGPHRDHPLGGVHPMELGPTATGQPWPLDPENSHEPSSHPEKPLPAVSPDPQADQVQMPRSCLW.

A signal peptide spans 1–29; it reads MGWRPRRARGTPLLLLLLLLLLWPVPGAG. Residues 30 to 203 constitute a propeptide that is removed on maturation; the sequence is VLQGHIPGQP…PGGPQSRGRR (174 aa). Topologically, residues 30-701 are extracellular; the sequence is VLQGHIPGQP…GPVQAENHDT (672 aa). Asparagine 109 is a glycosylation site (N-linked (GlcNAc...) asparagine). Residues 131 to 138 carry the Cysteine switch motif; it reads CTCSGMSG. Cysteine 133 is a binding site for Zn(2+). A glycan (N-linked (GlcNAc...) asparagine) is linked at asparagine 145. A disordered region spans residues 184 to 205; it reads PGNKAGMTSLPGGPQSRGRREA. The 200-residue stretch at 210–409 folds into the Peptidase M12B domain; that stretch reads KYLELYIVAD…GGGACLSNAP (200 aa). Asparagine 231 and asparagine 276 each carry an N-linked (GlcNAc...) asparagine glycan. Disulfide bonds link cysteine 320-cysteine 404, cysteine 360-cysteine 388, and cysteine 361-cysteine 371. Zn(2+) is bound at residue histidine 345. Glutamate 346 is a catalytic residue. 2 residues coordinate Zn(2+): histidine 349 and histidine 355. The Disintegrin domain occupies 417–503; it reads PALCGNGFVE…HCPPDVYLLD (87 aa). An N-linked (GlcNAc...) asparagine glycan is attached at asparagine 448. Intrachain disulfides connect cysteine 475/cysteine 495, cysteine 653/cysteine 663, cysteine 657/cysteine 669, and cysteine 671/cysteine 680. In terms of domain architecture, EGF-like spans 649-681; that stretch reads ELQRCLTACHSHGVCNSNHNCHCAPGWAPPFCD. A helical membrane pass occupies residues 702 to 722; it reads FLLAMLLSVLLPLLPGAGLAW. At 723 to 813 the chain is on the cytoplasmic side; it reads CCYRLPGAHL…QVQMPRSCLW (91 aa). Residues 746-813 form a disordered region; it reads SGPKDGPHRD…QVQMPRSCLW (68 aa). Positions 780–791 are enriched in basic and acidic residues; that stretch reads ENSHEPSSHPEK.

Requires Zn(2+) as cofactor. Post-translationally, the precursor is cleaved by a furin endopeptidase. In terms of tissue distribution, expressed in all tissues, except liver, with high expression in placenta, lung, spleen and veins.

It localises to the membrane. In Homo sapiens (Human), this protein is Disintegrin and metalloproteinase domain-containing protein 33 (ADAM33).